A 149-amino-acid chain; its full sequence is MERTFLMIKPDAVQRNLIGEVISRIERKGLKLVGGKLMQVPMELAETHYGEHQGKPFYNDLISFITSAPVFAMVVEGEDAVNVSRHIIGSTNPSEASPGSIRGDLGLTVGRNIIHGSDSLESAEREINLWFNENEITSYASPRDAWLYE.

The ATP site is built by K9, F57, R85, T91, R102, and N112. Residue H115 is the Pros-phosphohistidine intermediate of the active site.

Belongs to the NDK family. Homotetramer. The cofactor is Mg(2+).

Its subcellular location is the cytoplasm. The catalysed reaction is a 2'-deoxyribonucleoside 5'-diphosphate + ATP = a 2'-deoxyribonucleoside 5'-triphosphate + ADP. The enzyme catalyses a ribonucleoside 5'-diphosphate + ATP = a ribonucleoside 5'-triphosphate + ADP. Functionally, major role in the synthesis of nucleoside triphosphates other than ATP. The ATP gamma phosphate is transferred to the NDP beta phosphate via a ping-pong mechanism, using a phosphorylated active-site intermediate. The chain is Nucleoside diphosphate kinase from Staphylococcus aureus (strain Mu3 / ATCC 700698).